The sequence spans 114 residues: Large ribosomal subunit protein uL22 (114 aa).

It belongs to the universal ribosomal protein uL22 family. In terms of assembly, part of the 50S ribosomal subunit.

In terms of biological role, this protein binds specifically to 23S rRNA; its binding is stimulated by other ribosomal proteins, e.g. L4, L17, and L20. It is important during the early stages of 50S assembly. It makes multiple contacts with different domains of the 23S rRNA in the assembled 50S subunit and ribosome. The globular domain of the protein is located near the polypeptide exit tunnel on the outside of the subunit, while an extended beta-hairpin is found that lines the wall of the exit tunnel in the center of the 70S ribosome. The polypeptide is Large ribosomal subunit protein uL22 (Streptococcus mutans serotype c (strain ATCC 700610 / UA159)).